The chain runs to 662 residues: Mitochondrial Rho GTPase 1 (662 aa).

At 1–634 (MTKETIRVVI…AKDVDYRQTA (634 aa)) the chain is on the cytoplasmic side. The Miro 1 domain maps to 3-185 (KETIRVVICG…FYLCQRAITH (183 aa)). GTP contacts are provided by residues 12–19 (GDEGVGKS), 62–64 (DTS), and 116–119 (NKCD). EF-hand domains lie at 201-236 (LAVM…CFNK) and 330-365 (KGYR…TPGL). Residues aspartate 214, asparagine 216, aspartate 218, tyrosine 220, glutamate 225, aspartate 343, aspartate 345, aspartate 347, and glutamate 354 each contribute to the Ca(2+) site. One can recognise a Miro 2 domain in the interval 446–611 (RKVFNCFVIG…FIKITEAALD (166 aa)). Residues 455 to 462 (GKPCCGKS), 491 to 495 (ELKGG), and 560 to 563 (SKAD) contribute to the GTP site. Residues 635-655 (LIFGSTVGFVALCSFTLMKLF) traverse the membrane as a helical; Anchor for type IV membrane protein segment. The Mitochondrial intermembrane segment spans residues 656–662 (KSSKFSK).

It belongs to the mitochondrial Rho GTPase family.

The protein localises to the mitochondrion outer membrane. Its function is as follows. Mitochondrial GTPase involved in mitochondrial trafficking. Probably involved in control of anterograde transport of mitochondria and their subcellular distribution. The chain is Mitochondrial Rho GTPase 1 (GEM1) from Saccharomyces cerevisiae (strain ATCC 204508 / S288c) (Baker's yeast).